Consider the following 245-residue polypeptide: Isopentenyl phosphate kinase (245 aa).

Residue 5–9 participates in ATP binding; sequence KIGGS. Residue glycine 45 participates in substrate binding. Position 46 (glycine 46) interacts with ATP. Substrate contacts are provided by histidine 50 and glycine 143. ATP is bound by residues aspartate 164, 169–174, glycine 201, and lysine 205; that span reads YSKDPK.

Belongs to the isopentenyl phosphate kinase family. In terms of assembly, homodimer.

It catalyses the reaction isopentenyl phosphate + ATP = isopentenyl diphosphate + ADP. In terms of biological role, catalyzes the formation of isopentenyl diphosphate (IPP), the building block of all isoprenoids. Has lower activity with isopentenyl thiolophosphate (ISP). Has low activity with dimethylallyl phosphate (DMAP), 1-butyl phosphate (BP) and 3-buten-1-yl phosphate (BEP). Has no significant activity with geranyl phosphate (in vitro). This is Isopentenyl phosphate kinase from Thermoplasma acidophilum (strain ATCC 25905 / DSM 1728 / JCM 9062 / NBRC 15155 / AMRC-C165).